A 263-amino-acid chain; its full sequence is Isoprenyl transferase (263 aa).

Asp26 is an active-site residue. Asp26 is a binding site for Mg(2+). Substrate contacts are provided by residues 27–30 (GNGR), Trp31, Arg39, His43, and 71–73 (SSE). Asn74 functions as the Proton acceptor in the catalytic mechanism. Substrate contacts are provided by residues Trp75, Arg77, Arg191, and 197–199 (RIS). Glu210 provides a ligand contact to Mg(2+). The disordered stretch occupies residues 241–263 (GRTSEQIAGQQENKNTVSNEDRV). Polar residues predominate over residues 243-263 (TSEQIAGQQENKNTVSNEDRV).

Belongs to the UPP synthase family. As to quaternary structure, homodimer. The cofactor is Mg(2+).

Catalyzes the condensation of isopentenyl diphosphate (IPP) with allylic pyrophosphates generating different type of terpenoids. This is Isoprenyl transferase from Nitrosomonas europaea (strain ATCC 19718 / CIP 103999 / KCTC 2705 / NBRC 14298).